The primary structure comprises 274 residues: ATP synthase subunit delta (274 aa).

The protein belongs to the ATPase delta chain family. F-type ATPases have 2 components, F(1) - the catalytic core - and F(0) - the membrane proton channel. F(1) has five subunits: alpha(3), beta(3), gamma(1), delta(1), epsilon(1). F(0) has three main subunits: a(1), b(2) and c(10-14). The alpha and beta chains form an alternating ring which encloses part of the gamma chain. F(1) is attached to F(0) by a central stalk formed by the gamma and epsilon chains, while a peripheral stalk is formed by the delta and b chains.

It localises to the cell membrane. Its function is as follows. F(1)F(0) ATP synthase produces ATP from ADP in the presence of a proton or sodium gradient. F-type ATPases consist of two structural domains, F(1) containing the extramembraneous catalytic core and F(0) containing the membrane proton channel, linked together by a central stalk and a peripheral stalk. During catalysis, ATP synthesis in the catalytic domain of F(1) is coupled via a rotary mechanism of the central stalk subunits to proton translocation. In terms of biological role, this protein is part of the stalk that links CF(0) to CF(1). It either transmits conformational changes from CF(0) to CF(1) or is implicated in proton conduction. The sequence is that of ATP synthase subunit delta from Salinispora arenicola (strain CNS-205).